A 401-amino-acid polypeptide reads, in one-letter code: Ribosomal protein uS12 methylthiotransferase RimO (401 aa).

The MTTase N-terminal domain maps to 1–108 (MKINFINLGC…GIELLQTPKR (108 aa)). [4Fe-4S] cluster contacts are provided by Cys-10, Cys-43, Cys-72, Cys-124, Cys-128, and Cys-131. Positions 110–339 (LTTKHYAYLK…FNLSQEILEE (230 aa)) constitute a Radical SAM core domain.

It belongs to the methylthiotransferase family. RimO subfamily. Requires [4Fe-4S] cluster as cofactor.

The protein resides in the cytoplasm. It catalyses the reaction L-aspartate(89)-[ribosomal protein uS12]-hydrogen + (sulfur carrier)-SH + AH2 + 2 S-adenosyl-L-methionine = 3-methylsulfanyl-L-aspartate(89)-[ribosomal protein uS12]-hydrogen + (sulfur carrier)-H + 5'-deoxyadenosine + L-methionine + A + S-adenosyl-L-homocysteine + 2 H(+). Functionally, catalyzes the methylthiolation of an aspartic acid residue of ribosomal protein uS12. This is Ribosomal protein uS12 methylthiotransferase RimO from Hydrogenobaculum sp. (strain Y04AAS1).